Reading from the N-terminus, the 666-residue chain is L-aspartate N-monooxygenase (nitrosuccinate-forming) (666 aa).

A disordered region spans residues 645–666 (LPAYEDPGVRCPSDDRLTEVTA). Residues 656 to 666 (PSDDRLTEVTA) show a composition bias toward basic and acidic residues.

The protein belongs to the nitrosuccinic acid synthase family. FAD serves as cofactor.

It carries out the reaction L-aspartate + 3 NADPH + 3 O2 + 2 H(+) = 2-nitrobutanedioate + 3 NADP(+) + 4 H2O. It functions in the pathway antibiotic biosynthesis. Functionally, part of a gene cluster involved in the biosynthesis of cremeomycin, a light-sensitive o-diazoquinone with antibacterial and antiproliferative effects. Catalyzes the iterative oxidation of L-aspartic acid to nitrosuccinic acid (2-nitrobutanedioate) via N-hydroxyaspartic acid and nitrososuccinic acid. The chain is L-aspartate N-monooxygenase (nitrosuccinate-forming) from Streptomyces cremeus.